A 451-amino-acid chain; its full sequence is Serine/threonine-protein phosphatase 2A 55 kDa regulatory subunit B delta isoform (451 aa).

WD repeat units lie at residues 30 to 69 (AEADIISTVEFNYSGDLLATGDKGGRVVIFQREQENKSRP), 95 to 136 (EIEE…KRAE), 179 to 217 (AHTYHINSISVNSDHETYLSADDLRINLWHLEITDRSFN), 228 to 268 (ELTE…LCDR), 287 to 325 (EIISSISDVKFSHSGRYMMTRDYLSVKVWDLNMENRPVE), 342 to 383 (ENDC…DITL), and 418 to 451 (DFNKKILHTAWHPMENIIAVAATNNLYIFQDKIN).

This sequence belongs to the phosphatase 2A regulatory subunit B family. As to quaternary structure, PP2A consists of a common heterodimeric core enzyme, composed of a 36 kDa catalytic subunit (subunit C) and a 65 kDa constant regulatory subunit (PR65 or subunit A), that associates with a variety of regulatory subunits.

The protein resides in the cytoplasm. Functionally, substrate-recognition subunit of protein phosphatase 2A (PP2A) that plays a key role in cell cycle by controlling mitosis entry and exit. The activity of PP2A complexes containing PPP2R2D (PR55-delta) fluctuate during the cell cycle: the activity is high in interphase and low in mitosis. The chain is Serine/threonine-protein phosphatase 2A 55 kDa regulatory subunit B delta isoform (PPP2R2D) from Gallus gallus (Chicken).